The primary structure comprises 652 residues: Carboxypeptidase S1 homolog A (652 aa).

Residues 1–19 form the signal peptide; the sequence is MRFAASIAVALPVIHAASA. Cys-50 and Cys-121 form a disulfide bridge. N-linked (GlcNAc...) asparagine glycans are attached at residues Asn-77, Asn-132, Asn-161, Asn-168, Asn-184, and Asn-202. Ser-238 is an active-site residue. 4 N-linked (GlcNAc...) asparagine glycosylation sites follow: Asn-260, Asn-299, Asn-347, and Asn-410. 2 disulfide bridges follow: Cys-325–Cys-361 and Cys-332–Cys-354. Residue Asp-458 is part of the active site. Substrate is bound at residue Cys-461. 3 N-linked (GlcNAc...) asparagine glycosylation sites follow: Asn-474, Asn-492, and Asn-505. His-516 is a catalytic residue. Glu-517 contacts substrate. Residues 608–627 are disordered; that stretch reads AASKGNPPPTTTSSPTAAPT. The segment covering 618 to 627 has biased composition (low complexity); sequence TTSSPTAAPT. Gly-629 is lipidated: GPI-anchor amidated glycine. A propeptide spans 630–652 (removed in mature form); it reads SAMLKAPVAMLAISALTVLAFFL.

Belongs to the peptidase S10 family.

The protein localises to the cell membrane. It catalyses the reaction Preferential release of a C-terminal arginine or lysine residue.. Extracellular serine carboxypeptidase that contributes to pathogenicity. This chain is Carboxypeptidase S1 homolog A (SCPA), found in Trichophyton rubrum (Athlete's foot fungus).